A 271-amino-acid polypeptide reads, in one-letter code: Formamidopyrimidine-DNA glycosylase (271 aa).

Proline 2 functions as the Schiff-base intermediate with DNA in the catalytic mechanism. Glutamate 3 functions as the Proton donor in the catalytic mechanism. Lysine 58 serves as the catalytic Proton donor; for beta-elimination activity. DNA-binding residues include histidine 91, arginine 110, and arginine 152. The FPG-type zinc finger occupies 237 to 271 (LVYGREGQPCVHCGRPIRCETIGQRSSYFCTRCQR). Arginine 261 functions as the Proton donor; for delta-elimination activity in the catalytic mechanism.

The protein belongs to the FPG family. As to quaternary structure, monomer. Zn(2+) is required as a cofactor.

The enzyme catalyses Hydrolysis of DNA containing ring-opened 7-methylguanine residues, releasing 2,6-diamino-4-hydroxy-5-(N-methyl)formamidopyrimidine.. It carries out the reaction 2'-deoxyribonucleotide-(2'-deoxyribose 5'-phosphate)-2'-deoxyribonucleotide-DNA = a 3'-end 2'-deoxyribonucleotide-(2,3-dehydro-2,3-deoxyribose 5'-phosphate)-DNA + a 5'-end 5'-phospho-2'-deoxyribonucleoside-DNA + H(+). Its function is as follows. Involved in base excision repair of DNA damaged by oxidation or by mutagenic agents. Acts as a DNA glycosylase that recognizes and removes damaged bases. Has a preference for oxidized purines, such as 7,8-dihydro-8-oxoguanine (8-oxoG). Has AP (apurinic/apyrimidinic) lyase activity and introduces nicks in the DNA strand. Cleaves the DNA backbone by beta-delta elimination to generate a single-strand break at the site of the removed base with both 3'- and 5'-phosphates. In Syntrophotalea carbinolica (strain DSM 2380 / NBRC 103641 / GraBd1) (Pelobacter carbinolicus), this protein is Formamidopyrimidine-DNA glycosylase.